We begin with the raw amino-acid sequence, 428 residues long: Hercynine oxygenase (428 aa).

Fe cation is bound at residue His-46. Gamma-L-glutamyl-L-cysteine is bound at residue 82–85; it reads RASR. Fe cation-binding residues include His-129 and His-133. The gamma-L-glutamyl-L-cysteine site is built by Asp-411 and Arg-415.

It belongs to the EgtB family. In terms of assembly, monomer. Fe(2+) serves as cofactor.

The enzyme catalyses gamma-L-glutamyl-L-cysteine + hercynine + O2 = gamma-L-glutamyl-hercynylcysteine S-oxide + H2O. The protein operates within amino-acid biosynthesis; ergothioneine biosynthesis. Catalyzes the oxidative sulfurization of hercynine (N-alpha,N-alpha,N-alpha-trimethyl-L-histidine) into hercynyl-gamma-L-glutamyl-L-cysteine sulfoxide, a step in the biosynthesis pathway of ergothioneine. Cannot use the alternative thiols cysteine, N-acetylcysteine, or glutathione instead of gamma-glutamylcysteine as substrates, and histidine is a poor sulfur acceptor substrate compared to hercynine. This chain is Hercynine oxygenase, found in Mycolicibacterium smegmatis (strain ATCC 700084 / mc(2)155) (Mycobacterium smegmatis).